Reading from the N-terminus, the 340-residue chain is Deubiquitinase SseL (340 aa).

His-223 is a catalytic residue. Residue Cys-285 is the Nucleophile of the active site.

The protein belongs to the peptidase C79 family.

It localises to the secreted. The protein resides in the host cytoplasm. In terms of biological role, effector proteins function to alter host cell physiology and promote bacterial survival in host tissues. This protease targets the host cell ubiquitin pathway by acting as a deubiquitinase in infected host cells. Specifically hydrolyzes mono- and polyubiquitin substrates in vitro with a preference for 'Lys-63'-linked ubiquitin chains, suggesting that it interferes with a signaling pathway rather than inhibiting proteasomal-dependent degradation of its targets. Does not possess desumoylating activity. Is required for the Salmonella-induced delayed cytotoxicity in macrophages and full virulence. Is not required for intracellular bacterial replication. This is Deubiquitinase SseL (sseL) from Salmonella typhimurium (strain LT2 / SGSC1412 / ATCC 700720).